We begin with the raw amino-acid sequence, 56 residues long: Conotoxin Bu12 (56 aa).

The signal sequence occupies residues 1–2; the sequence is TA. A propeptide spanning residues 3-25 is cleaved from the precursor; that stretch reads EDSRGTQLHRALRKATKLPVSTR. Cystine bridges form between Cys-26-Cys-40, Cys-33-Cys-44, and Cys-39-Cys-49.

The protein belongs to the conotoxin O1 superfamily. As to expression, expressed by the venom duct.

Its subcellular location is the secreted. The polypeptide is Conotoxin Bu12 (Conus bullatus (Bubble cone)).